Here is a 281-residue protein sequence, read N- to C-terminus: uncharacterized protein (281 aa).

The protein resides in the plastid. It is found in the chloroplast. This is an uncharacterized protein from Euglena gracilis.